The chain runs to 407 residues: MTSEIHCDSLWYGADIVTMRDGKYHTLSNGAIATRDGKIVWLGEYDALPATLTADERVKFDGGIITPGFIDCHTHLVFGGNRSAEFEQRLNGVSYAEIAAQGGGIISTVKATRDADEERLLEQALFRLRPLLAEGVTCVEIKSGYGLTPESEMKMLRVARRLGELLPVEVKTTCLAAHALPPEYANRADDYIDLVCNTIIPQAAAAGLADAVDAFCEHLAFSPAQVARVFAAAEAAGLPVKLHAEQLSALGGSELAAQHHALSADHLEYATEQDARAMGDAGTVAVLLPGAYYLLRETQCPPVDLFRKHNVAMAIASDANPGTSPALSLRLMINMACTLFRLTPEEALAGVTTHAAKALGLQASHGTLETGKVADFIHWPLSRPAELAYWLGGQLPCTVIFRGEIRQ.

H73 and H75 together coordinate Fe(3+). The Zn(2+) site is built by H73 and H75. The 4-imidazolone-5-propanoate site is built by R82, Y145, and H178. Residue Y145 coordinates N-formimidoyl-L-glutamate. H243 lines the Fe(3+) pocket. A Zn(2+)-binding site is contributed by H243. Q246 is a binding site for 4-imidazolone-5-propanoate. D318 is a Fe(3+) binding site. D318 is a Zn(2+) binding site. N-formimidoyl-L-glutamate-binding residues include N320 and G322. T323 contacts 4-imidazolone-5-propanoate.

The protein belongs to the metallo-dependent hydrolases superfamily. HutI family. It depends on Zn(2+) as a cofactor. Fe(3+) serves as cofactor.

Its subcellular location is the cytoplasm. The enzyme catalyses 4-imidazolone-5-propanoate + H2O = N-formimidoyl-L-glutamate. The protein operates within amino-acid degradation; L-histidine degradation into L-glutamate; N-formimidoyl-L-glutamate from L-histidine: step 3/3. Catalyzes the hydrolytic cleavage of the carbon-nitrogen bond in imidazolone-5-propanoate to yield N-formimidoyl-L-glutamate. It is the third step in the universal histidine degradation pathway. This is Imidazolonepropionase from Serratia proteamaculans (strain 568).